We begin with the raw amino-acid sequence, 1212 residues long: DNA-directed RNA polymerase subunit beta' (1212 aa).

Cys60, Cys62, Cys75, and Cys78 together coordinate Zn(2+). Mg(2+) contacts are provided by Asp450, Asp452, and Asp454. Zn(2+) is bound by residues Cys819, Cys893, Cys900, and Cys903.

The protein belongs to the RNA polymerase beta' chain family. As to quaternary structure, the RNAP catalytic core consists of 2 alpha, 1 beta, 1 beta' and 1 omega subunit. When a sigma factor is associated with the core the holoenzyme is formed, which can initiate transcription. Requires Mg(2+) as cofactor. The cofactor is Zn(2+).

It carries out the reaction RNA(n) + a ribonucleoside 5'-triphosphate = RNA(n+1) + diphosphate. In terms of biological role, DNA-dependent RNA polymerase catalyzes the transcription of DNA into RNA using the four ribonucleoside triphosphates as substrates. This chain is DNA-directed RNA polymerase subunit beta', found in Streptococcus thermophilus (strain ATCC BAA-491 / LMD-9).